The following is a 173-amino-acid chain: Rubredoxin-2 (173 aa).

Rubredoxin-like domains lie at 2-53 (ASYK…FMLI) and 119-170 (YLKW…YVLY). 8 residues coordinate Fe cation: cysteine 6, cysteine 9, cysteine 39, cysteine 42, cysteine 124, cysteine 127, cysteine 157, and cysteine 160.

This sequence belongs to the rubredoxin family. Fe(3+) is required as a cofactor.

The protein localises to the cytoplasm. It functions in the pathway hydrocarbon metabolism; alkane degradation. In terms of biological role, involved in the hydrocarbon hydroxylating system, which transfers electrons from NADH to rubredoxin reductase and then through rubredoxin to alkane 1 monooxygenase. In Ectopseudomonas oleovorans (Pseudomonas oleovorans), this protein is Rubredoxin-2 (alkG).